A 453-amino-acid polypeptide reads, in one-letter code: Phosphoglucosamine mutase (453 aa).

The active-site Phosphoserine intermediate is the Ser109. Ser109, Asp246, Asp248, and Asp250 together coordinate Mg(2+). Ser109 is modified (phosphoserine).

It belongs to the phosphohexose mutase family. Mg(2+) serves as cofactor. In terms of processing, activated by phosphorylation.

The enzyme catalyses alpha-D-glucosamine 1-phosphate = D-glucosamine 6-phosphate. Functionally, catalyzes the conversion of glucosamine-6-phosphate to glucosamine-1-phosphate. In Leifsonia xyli subsp. xyli (strain CTCB07), this protein is Phosphoglucosamine mutase.